Reading from the N-terminus, the 75-residue chain is Small ribosomal subunit protein bS16 (75 aa).

Belongs to the bacterial ribosomal protein bS16 family.

This chain is Small ribosomal subunit protein bS16, found in Campylobacter jejuni subsp. jejuni serotype O:23/36 (strain 81-176).